A 182-amino-acid chain; its full sequence is NADH-dependent FAD reductase (182 aa).

An NAD(+)-binding site is contributed by Asp-16. Residues 47–48, 62–64, and His-98 each bind FAD; these read NS and CVG. His-143 contributes to the NAD(+) binding site.

Belongs to the non-flavoprotein flavin reductase family. As to quaternary structure, homodimer.

The catalysed reaction is FADH2 + NAD(+) = FAD + NADH + 2 H(+). The protein operates within antibiotic biosynthesis. The SgcE6-SgcC hydroxylation activity decreases in the presence of excess FAD. In terms of biological role, reductase component of a two-component system involved in the biosynthesis of the enediyne antitumor antibiotic C-1027. SgcE6 provides the FADH(2) required by both the halogenase SgcC3 and the monooxygenase SgcC through free diffusion. Accepts only NADH and FAD as substrates. This is NADH-dependent FAD reductase from Streptomyces globisporus.